The primary structure comprises 552 residues: Steroid transmembrane transporter SLC22A24 (552 aa).

Transmembrane regions (helical) follow at residues 16–36, 144–164, 178–198, 204–224, 235–255, 267–287, 350–370, 378–398, 407–427, 435–455, 469–489, and 496–516; these read FQIL…PHML, LISV…LIFG, CCLL…TFPV, FLGG…MSEW, GIIL…GFVI, IPLF…QWLI, IFYL…LMLN, IFLF…AVLL, ISQM…IFLS, VALA…HTVH, IGLN…LMIL, and LPWI…LLLP. Residues 524-552 are disordered; that stretch reads PNTIQDVENNRRDSRKTKQEDISMKVTQF. Residues 531 to 546 are compositionally biased toward basic and acidic residues; that stretch reads ENNRRDSRKTKQEDIS.

The protein belongs to the major facilitator (TC 2.A.1) superfamily. Organic cation transporter (TC 2.A.1.19) family.

Its subcellular location is the cell membrane. It catalyses the reaction estrone 3-sulfate(out) + glutarate(in) = estrone 3-sulfate(in) + glutarate(out). It carries out the reaction 17beta-estradiol 17-O-(beta-D-glucuronate)(out) + glutarate(in) = 17beta-estradiol 17-O-(beta-D-glucuronate)(in) + glutarate(out). The enzyme catalyses taurocholate(out) + glutarate(in) = taurocholate(in) + glutarate(out). The catalysed reaction is glycocholate(out) + glutarate(in) = glycocholate(in) + glutarate(out). It catalyses the reaction dehydroepiandrosterone 3-sulfate(out) + glutarate(in) = dehydroepiandrosterone 3-sulfate(in) + glutarate(out). It carries out the reaction glutarate(in) + succinate(out) = glutarate(out) + succinate(in). Its function is as follows. Renal transmembrane organic anion/dicarboxylate exchanger that participates in the reabsorption of conjugated steroids, as well as bile acids, driven by an outward gradient of dicarboxylates such as glutarate or succinate. Transports taurocholate, estrone 3-sulfate, and estradiol-17-glucuronide (17beta-estradiol 17-O-(beta-D-glucuronate)), but not androstanediol glucuronide (5alpha-androstane-3alpha,17beta-diol 3-O-(beta-D-glucuronate)). This is Steroid transmembrane transporter SLC22A24 from Equus caballus (Horse).